The primary structure comprises 297 residues: Phosphoribosylaminoimidazole-succinocarboxamide synthase (297 aa).

It belongs to the SAICAR synthetase family.

The catalysed reaction is 5-amino-1-(5-phospho-D-ribosyl)imidazole-4-carboxylate + L-aspartate + ATP = (2S)-2-[5-amino-1-(5-phospho-beta-D-ribosyl)imidazole-4-carboxamido]succinate + ADP + phosphate + 2 H(+). It functions in the pathway purine metabolism; IMP biosynthesis via de novo pathway; 5-amino-1-(5-phospho-D-ribosyl)imidazole-4-carboxamide from 5-amino-1-(5-phospho-D-ribosyl)imidazole-4-carboxylate: step 1/2. The sequence is that of Phosphoribosylaminoimidazole-succinocarboxamide synthase from Methylococcus capsulatus (strain ATCC 33009 / NCIMB 11132 / Bath).